The sequence spans 431 residues: Glucose-6-phosphate isomerase (431 aa).

Residue glutamate 284 is the Proton donor of the active site. Catalysis depends on residues histidine 305 and lysine 420.

This sequence belongs to the GPI family.

The protein resides in the cytoplasm. The enzyme catalyses alpha-D-glucose 6-phosphate = beta-D-fructose 6-phosphate. It functions in the pathway carbohydrate biosynthesis; gluconeogenesis. The protein operates within carbohydrate degradation; glycolysis; D-glyceraldehyde 3-phosphate and glycerone phosphate from D-glucose: step 2/4. Functionally, catalyzes the reversible isomerization of glucose-6-phosphate to fructose-6-phosphate. The protein is Glucose-6-phosphate isomerase of Mycoplasma genitalium (strain ATCC 33530 / DSM 19775 / NCTC 10195 / G37) (Mycoplasmoides genitalium).